The primary structure comprises 802 residues: DEAD-box ATP-dependent RNA helicase 28 (802 aa).

A disordered region spans residues 1–179; the sequence is MDADFRFDPD…TDKKSGVVDP (179 aa). 2 stretches are compositionally biased toward acidic residues: residues 76-131 and 138-169; these read GDSE…EELE and KSDEVEEGEEGQDGEEEEKEEGDEEAAEEEEE. Coiled-coil stretches lie at residues 90 to 122 and 149 to 174; these read DSEEDDKEVVEGEIDDEEDEVEESEDDDEGVEV and QDGEEEEKEEGDEEAAEEEEETDKKS. The Q motif signature appears at 194–222; the sequence is NSFLELNLSRPLLRACEALGYQKPTPIQA. The Helicase ATP-binding domain maps to 225-399; it reads IPLALTGRDI…TLSLNKPVRL (175 aa). 238–245 lines the ATP pocket; sequence AITGSGKT. The DEAD box signature appears at 347-350; the sequence is DEAD. The 145-residue stretch at 429 to 573 folds into the Helicase C-terminal domain; sequence VLLALCLKTF…SRIVAEKPVA (145 aa). Residues 572–616 adopt a coiled-coil conformation; that stretch reads VAECAKLIEELEDQISTIIQEEREERILRKAEMEATKAENMIAHK. The interval 639–802 is disordered; the sequence is KAAKESTSQG…KSKSRYNRRK (164 aa). Polar residues predominate over residues 644-659; that stretch reads STSQGKSNSGVISAQQ. Over residues 666–684 the composition is skewed to basic residues; it reads KEKKRREREKNLPRKKRRR. The stretch at 671-712 forms a coiled coil; the sequence is REREKNLPRKKRRRLEAEREMLEDESEDEEEAKESKGGKKEK. Residues 691–702 show a composition bias toward acidic residues; the sequence is MLEDESEDEEEA. Residues 776–802 are compositionally biased toward basic residues; sequence RSLKKNNVMRKKSKNSFKSKSRYNRRK.

It belongs to the DEAD box helicase family. DDX27/DRS1 subfamily.

It catalyses the reaction ATP + H2O = ADP + phosphate + H(+). The protein is DEAD-box ATP-dependent RNA helicase 28 of Oryza sativa subsp. japonica (Rice).